The chain runs to 111 residues: SPbeta prophage-derived uncharacterized protein YopW (111 aa).

This is SPbeta prophage-derived uncharacterized protein YopW (yopW) from Bacillus subtilis (strain 168).